Consider the following 963-residue polypeptide: Protein suppressor of white apricot (963 aa).

Residues 234 to 276 (IIEKTARFIATQGAQMEILIKAKQANNTQFDFLTQGGHLQPYY) form an SURP motif 1 repeat. Disordered regions lie at residues 290 to 322 (PAPQ…RRNP) and 360 to 430 (EDES…EPPQ). Residues 300–317 (NTDKEAPSADDHSEEVAG) show a composition bias toward basic and acidic residues. The segment covering 364-375 (SNPGNSQHSGGT) has biased composition (polar residues). Positions 407 to 418 (THEEESSNREQQ) are enriched in basic and acidic residues. A phosphoserine mark is found at S438, S447, S448, and S450. The disordered stretch occupies residues 445-470 (NYSSESEEEEDQVQPEKEEEKKPEPV). Basic and acidic residues predominate over residues 458–468 (QPEKEEEKKPE). The stretch at 483–523 (IIDKTATYVIKNGRQFEETLRTKSVDRFSFLLPANEYYPYY) is one SURP motif 2 repeat. Disordered stretches follow at residues 593-613 (PQEA…HVRP), 634-662 (TAGQ…ERVK), and 716-963 (PPES…SSSP). The span at 637 to 651 (QKGNITASPSCSSPQ) shows a compositional bias: polar residues. S649 carries the post-translational modification Phosphoserine. Residues 652-662 (KEQRQAEERVK) are compositionally biased toward basic and acidic residues. Residues 718–727 (ESAAGAATAD) show a composition bias toward low complexity. Acidic residues predominate over residues 768 to 778 (DEEDDDEEDGG). Positions 787 to 796 (NDDSTNTFTS) are enriched in polar residues. Over residues 799-809 (VLPPTAAPPPA) the composition is skewed to pro residues. A compositionally biased stretch (low complexity) spans 820-830 (QLVATTSTRSS). Positions 831 to 847 (SSRHLKTHRRSRSRSKN) are enriched in basic residues. The span at 848 to 858 (VRSSDSSPSSR) shows a compositional bias: low complexity. 2 stretches are compositionally biased toward basic residues: residues 861–870 (SRRRRQKSSR) and 882–913 (KSQH…RRSR). Phosphoserine is present on residues S912, S914, and S916. Positions 934-944 (AEQRRQQDRRR) are enriched in basic and acidic residues. Positions 945–963 (TPTKKSHKRHKRRRRSSSP) are enriched in basic residues.

It is found in the nucleus speckle. Regulator of pre-mRNA splicing (and, possibly, of other RNA processing events). Regulates its own expression at the level of RNA processing. This chain is Protein suppressor of white apricot (su(w[a])), found in Drosophila melanogaster (Fruit fly).